The primary structure comprises 332 residues: Autoinducer 2 import system permease protein LsrD (332 aa).

Helical transmembrane passes span 7 to 27 (YSWEIALAALLIFEILAFGLI), 45 to 65 (ICIGIVALPLTMVIVSGGMDI), 70 to 90 (TIGLCAITLGVLFQLGMPLPL), 91 to 111 (AIIITLLLGAICGLINAGLII), 118 to 138 (LVITLGTMYLFGGSALLLSGM), 162 to 182 (FLGIPMPLIFFLVCCLFFWLL), 216 to 236 (VYAMTGCASAIAAVLLVSYFG), 240 to 260 (SDLGASFLMPTITAVVLGGAN), 261 to 281 (IYGGSGSIMGSALAALLVGFL), and 288 to 308 (AGVPNQISSALSGALLIVVVV).

This sequence belongs to the binding-protein-dependent transport system permease family. AraH/RbsC subfamily. In terms of assembly, the complex is composed of two ATP-binding proteins (LsrA), two transmembrane proteins (LsrC and LsrD) and a solute-binding protein (LsrB).

The protein localises to the cell inner membrane. Functionally, part of the ABC transporter complex LsrABCD involved in autoinducer 2 (AI-2) import. Probably responsible for the translocation of the substrate across the membrane. This is Autoinducer 2 import system permease protein LsrD (lsrD) from Salmonella typhi.